Consider the following 276-residue polypeptide: Dermonecrotic toxin LafSicTox-betaIE2 (276 aa).

Residue His5 is part of the active site. Glu25 and Asp27 together coordinate Mg(2+). Catalysis depends on His41, which acts as the Nucleophile. Intrachain disulfides connect Cys45–Cys51 and Cys47–Cys189. Residue Asp85 participates in Mg(2+) binding.

It belongs to the arthropod phospholipase D family. Class II subfamily. Mg(2+) is required as a cofactor. Expressed by the venom gland.

Its subcellular location is the secreted. The catalysed reaction is an N-(acyl)-sphingosylphosphocholine = an N-(acyl)-sphingosyl-1,3-cyclic phosphate + choline. It carries out the reaction an N-(acyl)-sphingosylphosphoethanolamine = an N-(acyl)-sphingosyl-1,3-cyclic phosphate + ethanolamine. The enzyme catalyses a 1-acyl-sn-glycero-3-phosphocholine = a 1-acyl-sn-glycero-2,3-cyclic phosphate + choline. It catalyses the reaction a 1-acyl-sn-glycero-3-phosphoethanolamine = a 1-acyl-sn-glycero-2,3-cyclic phosphate + ethanolamine. Functionally, dermonecrotic toxins cleave the phosphodiester linkage between the phosphate and headgroup of certain phospholipids (sphingolipid and lysolipid substrates), forming an alcohol (often choline) and a cyclic phosphate. This toxin acts on sphingomyelin (SM). It may also act on ceramide phosphoethanolamine (CPE), lysophosphatidylcholine (LPC) and lysophosphatidylethanolamine (LPE), but not on lysophosphatidylserine (LPS), and lysophosphatidylglycerol (LPG). It acts by transphosphatidylation, releasing exclusively cyclic phosphate products as second products. Induces dermonecrosis, hemolysis, increased vascular permeability, edema, inflammatory response, and platelet aggregation. The chain is Dermonecrotic toxin LafSicTox-betaIE2 from Loxosceles aff. spinulosa (strain GJB-2008) (Recluse spider).